Reading from the N-terminus, the 840-residue chain is DNA mismatch repair protein MutS (840 aa).

601–608 (GPNMSGKS) is a binding site for ATP.

Belongs to the DNA mismatch repair MutS family.

Functionally, this protein is involved in the repair of mismatches in DNA. It is possible that it carries out the mismatch recognition step. This protein has a weak ATPase activity. In Lactococcus lactis subsp. cremoris (strain MG1363), this protein is DNA mismatch repair protein MutS.